Consider the following 225-residue polypeptide: Probable septum site-determining protein MinC (225 aa).

The segment at 87 to 112 is disordered; sequence PTHMASPQGNSSKTRSSDTQPKPKTP. Residues 91-108 are compositionally biased toward polar residues; the sequence is ASPQGNSSKTRSSDTQPK.

The protein belongs to the MinC family. In terms of assembly, interacts with MinD and FtsZ.

Functionally, cell division inhibitor that blocks the formation of polar Z ring septums. Rapidly oscillates between the poles of the cell to destabilize FtsZ filaments that have formed before they mature into polar Z rings. Prevents FtsZ polymerization. The chain is Probable septum site-determining protein MinC from Prochlorococcus marinus (strain MIT 9313).